Here is a 294-residue protein sequence, read N- to C-terminus: NAD kinase (294 aa).

Catalysis depends on D74, which acts as the Proton acceptor. Residues 74–75 (DG), 148–149 (NE), H159, R176, D178, 189–194 (TAYSLS), and Q249 each bind NAD(+).

The protein belongs to the NAD kinase family. Requires a divalent metal cation as cofactor.

Its subcellular location is the cytoplasm. It catalyses the reaction NAD(+) + ATP = ADP + NADP(+) + H(+). Involved in the regulation of the intracellular balance of NAD and NADP, and is a key enzyme in the biosynthesis of NADP. Catalyzes specifically the phosphorylation on 2'-hydroxyl of the adenosine moiety of NAD to yield NADP. The sequence is that of NAD kinase from Vibrio parahaemolyticus serotype O3:K6 (strain RIMD 2210633).